The chain runs to 520 residues: Glutamate--cysteine ligase (520 aa).

Belongs to the glutamate--cysteine ligase type 1 family. Type 1 subfamily.

The enzyme catalyses L-cysteine + L-glutamate + ATP = gamma-L-glutamyl-L-cysteine + ADP + phosphate + H(+). The protein operates within sulfur metabolism; glutathione biosynthesis; glutathione from L-cysteine and L-glutamate: step 1/2. The sequence is that of Glutamate--cysteine ligase from Serratia proteamaculans (strain 568).